Consider the following 569-residue polypeptide: MKFIGKLLLYILIALLVAIAGLYFLLQTRWGAEHISAWVSENSDYHLAFGAMDHRFSAPSHIVLENVTFGRDGQPATLVAKSVDIALSSRQLTEPRHVDTILLENGTLNLTDQTAPLPFKADRLQLRDMAFNSPNSEWKLSAQRVNGGVVPWSPKAGKVLGTKAQIQFSAGSLSLNDVPATNVLIEGSIDNDRVTLTNLGADIARGTLTGNAQRNADGSWQVENLRMADIRLQSEKSLTDFFAPLRSVPSLQIGRLEVIDARLQGPDWAVTDLDLSLRNMTFSKDDWQTQEGKLSMNASEFIYGSLHLFDPIINTEFSPQGVALRQFTSRWEGGMVRTSGNWLRDGKTLILDDAAIAGLEYTLPKNWQQLWMETTPGWLNSLQLKRFSASRNLIIDIDPDFPWQLTALDGYGANLTLVTDHKWGVWSGSANLNAAAATFNRVDVRRPSLALTANSSTVNISELSAFTEKGILEATASVSQTPQRQTHISLNGRGVPVNILQQWGWPELPLTGDGNIQLTASGDIQANVPLKPTVSGQLHAVNAAKQQVTQTMNAGIVSSGEVTSTEPVR.

Over 1–6 (MKFIGK) the chain is Cytoplasmic. The chain crosses the membrane as a helical span at residues 7 to 27 (LLLYILIALLVAIAGLYFLLQ). The Periplasmic portion of the chain corresponds to 28–569 (TRWGAEHISA…GEVTSTEPVR (542 aa)).

It belongs to the AsmA family.

Its subcellular location is the cell inner membrane. This Escherichia coli (strain K12) protein is AsmA family protein YicH (yicH).